Reading from the N-terminus, the 215-residue chain is Cytidylate kinase (215 aa).

An ATP-binding site is contributed by 10–18 (GPAAAGKST).

Belongs to the cytidylate kinase family. Type 1 subfamily.

Its subcellular location is the cytoplasm. The enzyme catalyses CMP + ATP = CDP + ADP. It carries out the reaction dCMP + ATP = dCDP + ADP. In Staphylococcus epidermidis (strain ATCC 35984 / DSM 28319 / BCRC 17069 / CCUG 31568 / BM 3577 / RP62A), this protein is Cytidylate kinase.